The sequence spans 754 residues: 1,4-alpha-glucan branching enzyme GlgB (754 aa).

The active-site Nucleophile is the Asp-431. The active-site Proton donor is the Glu-484.

This sequence belongs to the glycosyl hydrolase 13 family. GlgB subfamily. Monomer.

The catalysed reaction is Transfers a segment of a (1-&gt;4)-alpha-D-glucan chain to a primary hydroxy group in a similar glucan chain.. It participates in glycan biosynthesis; glycogen biosynthesis. Functionally, catalyzes the formation of the alpha-1,6-glucosidic linkages in glycogen by scission of a 1,4-alpha-linked oligosaccharide from growing alpha-1,4-glucan chains and the subsequent attachment of the oligosaccharide to the alpha-1,6 position. This is 1,4-alpha-glucan branching enzyme GlgB from Prochlorococcus marinus (strain MIT 9215).